Here is a 66-residue protein sequence, read N- to C-terminus: MNWQHTPRGGYGYSVCVAGIVTKIAAKRVQIRVAVRSGNEWQQVTKWVEPARLSTREKPVPELDGA.

The segment at residues 33 to 52 is a DNA-binding region (H-T-H motif); it reads VAVRSGNEWQQVTKWVEPAR.

The chain is Protein KleD (kleD) from Escherichia coli.